Consider the following 386-residue polypeptide: Cytochrome b (386 aa).

Transmembrane regions (helical) follow at residues 32 to 52 (FGSLLALCLIIQIVTGVTLAM), 76 to 98 (WLIRYLHANTASAFFFLVYLHVG), 113 to 133 (TWIIGSIILIVMMATAFLGYV), and 179 to 199 (FFALHFVLPFVLAALVIMHLI). Heme b contacts are provided by His-82 and His-96. Residues His-183 and His-197 each coordinate heme b. His-202 provides a ligand contact to a ubiquinone. A run of 4 helical transmembrane segments spans residues 226–246 (YIFKDLITIFLFFFVLSLFVF), 290–310 (LLGVIAMFSAILIILVMPITD), 322–342 (LSKVAFYVFVANFLILMQLGA), and 349–369 (FIEFGQISTVLYFSHFLVIMP).

This sequence belongs to the cytochrome b family. In terms of assembly, fungal cytochrome b-c1 complex contains 10 subunits; 3 respiratory subunits, 2 core proteins and 5 low-molecular weight proteins. Cytochrome b-c1 complex is a homodimer. The cofactor is heme b.

The protein localises to the mitochondrion inner membrane. Functionally, component of the ubiquinol-cytochrome c reductase complex (complex III or cytochrome b-c1 complex) that is part of the mitochondrial respiratory chain. The b-c1 complex mediates electron transfer from ubiquinol to cytochrome c. Contributes to the generation of a proton gradient across the mitochondrial membrane that is then used for ATP synthesis. This chain is Cytochrome b (cob), found in Talaromyces marneffei (Penicillium marneffei).